The chain runs to 398 residues: Glutamyl-tRNA reductase (398 aa).

Residues 45–48, serine 88, 93–95, and glutamine 99 contribute to the substrate site; these read TCNR and EDQ. Cysteine 46 functions as the Nucleophile in the catalytic mechanism. 168–173 is a binding site for NADP(+); sequence GAGKMG.

This sequence belongs to the glutamyl-tRNA reductase family. In terms of assembly, homodimer.

The catalysed reaction is (S)-4-amino-5-oxopentanoate + tRNA(Glu) + NADP(+) = L-glutamyl-tRNA(Glu) + NADPH + H(+). It participates in porphyrin-containing compound metabolism; protoporphyrin-IX biosynthesis; 5-aminolevulinate from L-glutamyl-tRNA(Glu): step 1/2. Catalyzes the NADPH-dependent reduction of glutamyl-tRNA(Glu) to glutamate 1-semialdehyde (GSA). This chain is Glutamyl-tRNA reductase (hemA), found in Methanothermobacter marburgensis (strain ATCC BAA-927 / DSM 2133 / JCM 14651 / NBRC 100331 / OCM 82 / Marburg) (Methanobacterium thermoautotrophicum).